The primary structure comprises 480 residues: Lysosomal protective protein (480 aa).

A signal peptide spans 1–28 (MIRAAPPPLFLLLLLLLLLVSWASRGEA). 4 cysteine pairs are disulfide-bonded: Cys-88–Cys-362, Cys-240–Cys-256, Cys-241–Cys-246, and Cys-281–Cys-331. Asn-145 is a glycosylation site (N-linked (GlcNAc...) asparagine). The active site involves Ser-178. The N-linked (GlcNAc...) asparagine glycan is linked to Asn-333. Residues Asp-400 and His-457 contribute to the active site.

It belongs to the peptidase S10 family. In terms of assembly, heterodimer of a 32 kDa chain and a 20 kDa chain; disulfide-linked.

It localises to the lysosome. The enzyme catalyses Release of a C-terminal amino acid with broad specificity.. Its function is as follows. Protective protein appears to be essential for both the activity of beta-galactosidase and neuraminidase, it associates with these enzymes and exerts a protective function necessary for their stability and activity. This protein is also a carboxypeptidase and can deamidate tachykinins. The protein is Lysosomal protective protein (CTSA) of Homo sapiens (Human).